The following is a 172-amino-acid chain: Adenine phosphoribosyltransferase (172 aa).

The protein belongs to the purine/pyrimidine phosphoribosyltransferase family. As to quaternary structure, homodimer.

The protein localises to the cytoplasm. The enzyme catalyses AMP + diphosphate = 5-phospho-alpha-D-ribose 1-diphosphate + adenine. It participates in purine metabolism; AMP biosynthesis via salvage pathway; AMP from adenine: step 1/1. Catalyzes a salvage reaction resulting in the formation of AMP, that is energically less costly than de novo synthesis. The sequence is that of Adenine phosphoribosyltransferase from Streptococcus agalactiae serotype III (strain NEM316).